The primary structure comprises 802 residues: E3 ubiquitin-protein ligase RNF10 (802 aa).

Low complexity-rich tracts occupy residues 1–31 (MPQS…SGSS), 78–90 (SNQS…QKSK), and 104–113 (SKPFSSSSNG). Residues 1 to 134 (MPQSSPSTAA…AEFSPAQFSG (134 aa)) form a disordered region. Serine 5 is modified (phosphoserine). Serine 110 carries the post-translational modification Phosphoserine. Positions 114–124 (GRRDEVAEAQR) are enriched in basic and acidic residues. Serine 128 is modified (phosphoserine). An RING-type zinc finger spans residues 225–267 (CPICLYPPTAAKITRCGHIFCWACILHYLSLSERTWSKCPICY). Over residues 645-654 (DSALGPTSTE) the composition is skewed to polar residues. 3 disordered regions span residues 645–664 (DSAL…LSPL), 716–753 (DGWP…VPSF), and 767–802 (KLDT…VHTK). The span at 716 to 728 (DGWPKAAPKKDDN) shows a compositional bias: basic and acidic residues. A compositionally biased stretch (polar residues) spans 793 to 802 (LFSTSVVHTK).

The protein belongs to the RNF10 family. In terms of assembly, interacts with MEOX2.

It is found in the cytoplasm. The protein resides in the nucleus. It catalyses the reaction S-ubiquitinyl-[E2 ubiquitin-conjugating enzyme]-L-cysteine + [acceptor protein]-L-lysine = [E2 ubiquitin-conjugating enzyme]-L-cysteine + N(6)-ubiquitinyl-[acceptor protein]-L-lysine.. It participates in protein modification; protein ubiquitination. Functionally, E3 ubiquitin-protein ligase that catalyzes monoubiquitination of 40S ribosomal proteins RPS2/us5 and RPS3/us3 in response to ribosome stalling. Part of a ribosome quality control that takes place when ribosomes have stalled during translation initiation (iRQC): RNF10 acts by mediating monoubiquitination of RPS2/us5 and RPS3/us3, promoting their degradation by the proteasome. Also promotes ubiquitination of 40S ribosomal proteins in response to ribosome stalling during translation elongation. The action of RNF10 in iRQC is counteracted by USP10. May also act as a transcriptional factor involved in the regulation of MAG (Myelin-associated glycoprotein) expression. Acts as a regulator of Schwann cell differentiation and myelination. The polypeptide is E3 ubiquitin-protein ligase RNF10 (Rattus norvegicus (Rat)).